Reading from the N-terminus, the 525-residue chain is Bifunctional purine biosynthesis protein PurH (525 aa).

An MGS-like domain is found at 1 to 145; that stretch reads MSNVERALIS…KNNASVGIVT (145 aa).

Belongs to the PurH family.

It carries out the reaction (6R)-10-formyltetrahydrofolate + 5-amino-1-(5-phospho-beta-D-ribosyl)imidazole-4-carboxamide = 5-formamido-1-(5-phospho-D-ribosyl)imidazole-4-carboxamide + (6S)-5,6,7,8-tetrahydrofolate. The catalysed reaction is IMP + H2O = 5-formamido-1-(5-phospho-D-ribosyl)imidazole-4-carboxamide. The protein operates within purine metabolism; IMP biosynthesis via de novo pathway; 5-formamido-1-(5-phospho-D-ribosyl)imidazole-4-carboxamide from 5-amino-1-(5-phospho-D-ribosyl)imidazole-4-carboxamide (10-formyl THF route): step 1/1. It participates in purine metabolism; IMP biosynthesis via de novo pathway; IMP from 5-formamido-1-(5-phospho-D-ribosyl)imidazole-4-carboxamide: step 1/1. This Alcanivorax borkumensis (strain ATCC 700651 / DSM 11573 / NCIMB 13689 / SK2) protein is Bifunctional purine biosynthesis protein PurH.